Consider the following 393-residue polypeptide: Acetylornithine aminotransferase 1 (393 aa).

Residue R131 coordinates N(2)-acetyl-L-ornithine. 215 to 218 (DEVQ) contacts pyridoxal 5'-phosphate. N6-(pyridoxal phosphate)lysine is present on K244. A N(2)-acetyl-L-ornithine-binding site is contributed by T272. T273 is a pyridoxal 5'-phosphate binding site.

It belongs to the class-III pyridoxal-phosphate-dependent aminotransferase family. ArgD subfamily. As to quaternary structure, homodimer. The cofactor is pyridoxal 5'-phosphate.

Its subcellular location is the cytoplasm. The enzyme catalyses N(2)-acetyl-L-ornithine + 2-oxoglutarate = N-acetyl-L-glutamate 5-semialdehyde + L-glutamate. It functions in the pathway amino-acid biosynthesis; L-arginine biosynthesis; N(2)-acetyl-L-ornithine from L-glutamate: step 4/4. This chain is Acetylornithine aminotransferase 1, found in Bordetella pertussis (strain Tohama I / ATCC BAA-589 / NCTC 13251).